Consider the following 200-residue polypeptide: MSRFLGSIFKKSRRYGISLLENNKEFTKGKKRTTAPGQHGARRVKPSDYQLHLYEKQKVRYMYGLNERQFKHLYSIASKKQGVTGVILLQMIESRLDNLVFRAGFARTRAQARQFVNHGHFTVDGHKANIPSMVIKVGSVIEMKPSLQTSPQVKDAVEAMTVSPWLTKTDFKVTFNRLPERKEFAKDINEALIVEYYNRR.

Residues Ser-94–Val-157 form the S4 RNA-binding domain.

Belongs to the universal ribosomal protein uS4 family. As to quaternary structure, part of the 30S ribosomal subunit. Contacts protein S5. The interaction surface between S4 and S5 is involved in control of translational fidelity.

In terms of biological role, one of the primary rRNA binding proteins, it binds directly to 16S rRNA where it nucleates assembly of the body of the 30S subunit. Functionally, with S5 and S12 plays an important role in translational accuracy. The chain is Small ribosomal subunit protein uS4 from Metamycoplasma arthritidis (strain 158L3-1) (Mycoplasma arthritidis).